The following is a 274-amino-acid chain: Ribosomal RNA small subunit methyltransferase A (274 aa).

The S-adenosyl-L-methionine site is built by histidine 15, leucine 17, glycine 42, glutamate 64, aspartate 89, and asparagine 109.

It belongs to the class I-like SAM-binding methyltransferase superfamily. rRNA adenine N(6)-methyltransferase family. RsmA subfamily.

The protein resides in the cytoplasm. The enzyme catalyses adenosine(1518)/adenosine(1519) in 16S rRNA + 4 S-adenosyl-L-methionine = N(6)-dimethyladenosine(1518)/N(6)-dimethyladenosine(1519) in 16S rRNA + 4 S-adenosyl-L-homocysteine + 4 H(+). Specifically dimethylates two adjacent adenosines (A1518 and A1519) in the loop of a conserved hairpin near the 3'-end of 16S rRNA in the 30S particle. May play a critical role in biogenesis of 30S subunits. The polypeptide is Ribosomal RNA small subunit methyltransferase A (Synechococcus sp. (strain CC9902)).